We begin with the raw amino-acid sequence, 535 residues long: CTP synthase (535 aa).

The segment at 1–266 (MKTKFIFITG…DERVVEKLNI (266 aa)) is amidoligase domain. A CTP-binding site is contributed by serine 14. Serine 14 contacts UTP. ATP is bound by residues 15-20 (SIGKGL) and aspartate 72. Mg(2+)-binding residues include aspartate 72 and glutamate 140. Residues 147-149 (DIE), 187-192 (KTKPTQ), and lysine 223 contribute to the CTP site. UTP-binding positions include 187–192 (KTKPTQ) and lysine 223. Residues 292–534 (RIAIVGKYVN…VRAALIQRDA (243 aa)) form the Glutamine amidotransferase type-1 domain. Glycine 354 contributes to the L-glutamine binding site. Residue cysteine 381 is the Nucleophile; for glutamine hydrolysis of the active site. L-glutamine-binding positions include 382-385 (LGMQ), glutamate 405, and arginine 462. Catalysis depends on residues histidine 507 and glutamate 509.

It belongs to the CTP synthase family. In terms of assembly, homotetramer.

The catalysed reaction is UTP + L-glutamine + ATP + H2O = CTP + L-glutamate + ADP + phosphate + 2 H(+). It catalyses the reaction L-glutamine + H2O = L-glutamate + NH4(+). The enzyme catalyses UTP + NH4(+) + ATP = CTP + ADP + phosphate + 2 H(+). Its pathway is pyrimidine metabolism; CTP biosynthesis via de novo pathway; CTP from UDP: step 2/2. With respect to regulation, allosterically activated by GTP, when glutamine is the substrate; GTP has no effect on the reaction when ammonia is the substrate. The allosteric effector GTP functions by stabilizing the protein conformation that binds the tetrahedral intermediate(s) formed during glutamine hydrolysis. Inhibited by the product CTP, via allosteric rather than competitive inhibition. Functionally, catalyzes the ATP-dependent amination of UTP to CTP with either L-glutamine or ammonia as the source of nitrogen. Regulates intracellular CTP levels through interactions with the four ribonucleotide triphosphates. This is CTP synthase from Pelobacter propionicus (strain DSM 2379 / NBRC 103807 / OttBd1).